The primary structure comprises 185 residues: MVRYAATSANPAKSASARGSYLRVSYKNTRETAQAISGWKLERAQKYLDQVLDHQRAIPFRRFNSSIGRTGQGKEFGVTKARWPAKSVNFIKDLLRNGQANAESKGLDASKLKVSHIQVNQAPKQRRRTYRAHGRINAYQSSPCHIELILTEENEAVEKADDSKKVRLNVRQRGRLATQKRVTAA.

Belongs to the universal ribosomal protein uL22 family.

The protein is Large ribosomal subunit protein uL22 (RPL17) of Debaryomyces hansenii (strain ATCC 36239 / CBS 767 / BCRC 21394 / JCM 1990 / NBRC 0083 / IGC 2968) (Yeast).